Consider the following 610-residue polypeptide: MNYYVCLHQEGVNSIPKLIEKAFANNYNVVSTSINANMLPFEPHESDPTYPATILSGSDWNSKVIFTMSDVNVDSPNDKLREHAKEVFMRDVAWAEHLQNVGNLMVRLRGPENENLASIVLAKTKDDFPSGNWFIQVPITNPELATFEHRKDATAEEVAEAESNDPWNWWNNLRMVTKHSTKVKVVIELNDADRPSKETVRRWLGEPIEAIIIPSSLFVRNRSNYCVLKKEWQLIVGHFISVRANIIISTNPNDKALCQYADYVNKLINDNCDKHMLNSYENMLEIPLQPLCDNLDTYTYEVFETDPVKYKLYQDAVQAALLDRVSAAEAKTKLTVVMLLGGGRGPLARAVFNAAELTKRKVRLYIIEKNPNAIRTLSNMVKTLWADKDVHIFSKDMRDFSPPELADIMVSELLGSFGDNELSPECLDGALKLLKPDGISIPYKSTSYINPLMSAVLHQNVCQLLPTYPAFDYGYVSLLKNIYHIDEPQALFEFVHPNRAENIDNTRCKTVSFKVNKDCVLHGIGGYFDTHLYKDICLSINPLTHTPGMFSWFPMFFATRPRTLREGQTISIQFWRCVDATKVWYEWQVVNSPDDWEHHNTRGTGYNMRL.

Positions 284 to 587 (LEIPLQPLCD…VDATKVWYEW (304 aa)) constitute an SAM-dependent MTase PRMT-type domain. S-adenosyl-L-methionine is bound at residue tyrosine 300. Phenylalanine 303 contributes to the a protein binding site. S-adenosyl-L-methionine-binding positions include 309–310 (KY), glutamate 368, and 396–397 (DM). Residues glutamate 412 and glutamate 421 each coordinate a protein. Residues glutamate 412 and glutamate 421 each act as proton donor/acceptor in the active site. Positions 470–610 (AFDYGYVSLL…TRGTGYNMRL (141 aa)) are interaction with vls.

It belongs to the class I-like SAM-binding methyltransferase superfamily. Protein arginine N-methyltransferase family. In terms of assembly, interacts with vls. In terms of tissue distribution, expressed only in ovaries.

It localises to the cytoplasm. Functionally, arginine methyltransferase that can both catalyze the formation of omega-N monomethylarginine (MMA) and symmetrical dimethylarginine (sDMA). Specifically mediates the symmetrical dimethylation of arginine residues in the small nuclear ribonucleoproteins SmD1 and SmD3. Required for arginine symmetrical dimethylation of piwi family proteins, piwi, aub and AGO3, during germline development. Required during oogenesis for pole cell formation in the pathway controlled by oskar (osk) and for abdominal segments during early embryogenesis. Involved in nanos (nos) and germ cell mRNAs localization. This chain is Protein arginine N-methyltransferase 5, found in Drosophila melanogaster (Fruit fly).